The chain runs to 459 residues: Mycothione reductase (459 aa).

31 to 39 (EQGTFGGTC) is an FAD binding site. Cysteine 39 and cysteine 44 are oxidised to a cystine. Catalysis depends on histidine 444, which acts as the Proton acceptor.

This sequence belongs to the class-I pyridine nucleotide-disulfide oxidoreductase family. Homodimer. Requires FAD as cofactor.

The enzyme catalyses 2 mycothiol + NADP(+) = mycothione + NADPH + H(+). The catalysed reaction is 2 mycothiol + NAD(+) = mycothione + NADH + H(+). Its function is as follows. Catalyzes the NAD(P)H-dependent reduction of mycothione (the oxidized disulfide form of mycothiol) to mycothiol. This chain is Mycothione reductase (mtr), found in Mycobacterium tuberculosis (strain CDC 1551 / Oshkosh).